We begin with the raw amino-acid sequence, 311 residues long: Probable manganese-dependent inorganic pyrophosphatase (311 aa).

6 residues coordinate Mn(2+): H9, D13, D15, D77, H99, and D151.

It belongs to the PPase class C family. Requires Mn(2+) as cofactor.

Its subcellular location is the cytoplasm. It carries out the reaction diphosphate + H2O = 2 phosphate + H(+). In Streptococcus equi subsp. zooepidemicus (strain H70), this protein is Probable manganese-dependent inorganic pyrophosphatase.